Reading from the N-terminus, the 763-residue chain is Phosphoglycerol transferase I (763 aa).

The next 4 membrane-spanning stretches (helical) occupy residues 1 to 21, 26 to 46, 77 to 97, and 108 to 128; these read MSEL…AWKA, WWFA…ITLY, ILPG…LGWV, and VGYS…SPAF.

It belongs to the OpgB family.

The protein localises to the cell inner membrane. The enzyme catalyses a phosphatidylglycerol + a membrane-derived-oligosaccharide D-glucose = a 1,2-diacyl-sn-glycerol + a membrane-derived-oligosaccharide 6-(glycerophospho)-D-glucose.. The protein operates within glycan metabolism; osmoregulated periplasmic glucan (OPG) biosynthesis. Its function is as follows. Transfers a phosphoglycerol residue from phosphatidylglycerol to the membrane-bound nascent glucan backbones. This is Phosphoglycerol transferase I from Salmonella choleraesuis (strain SC-B67).